The following is a 220-amino-acid chain: 26S proteasome non-ATPase regulatory subunit 9 (220 aa).

2 coiled-coil regions span residues 4 to 32 (GTTT…GQIL) and 61 to 91 (RLAR…YHSE). Positions 102 to 200 (RASALDLDSD…QLDLILVPKT (99 aa)) constitute a PDZ domain.

This sequence belongs to the proteasome subunit p27 family. Interacts with PI31; this interaction is increased by PI31 ADP-ribosylation. Interacts with Rpt5.

Functionally, acts as a chaperone during the assembly of the 26S proteasome, specifically of the base subcomplex of the PA700/19S regulatory complex (RC). The chain is 26S proteasome non-ATPase regulatory subunit 9 from Drosophila melanogaster (Fruit fly).